Here is a 689-residue protein sequence, read N- to C-terminus: Putative ATP-dependent helicase IRC3 (689 aa).

One can recognise a Helicase ATP-binding domain in the interval 46–211 (NSIRQGTKRI…SMVMDKIVYH (166 aa)). 59–66 (LATGGGKT) contributes to the ATP binding site. The short motif at 158-161 (DEAH) is the DEAH box element. The Helicase C-terminal domain maps to 265–438 (ILKTYLHKKQ…KIDERLRALF (174 aa)).

The protein belongs to the helicase family. IRC3 subfamily.

The protein localises to the mitochondrion. This chain is Putative ATP-dependent helicase IRC3 (IRC3), found in Saccharomyces cerevisiae (strain ATCC 204508 / S288c) (Baker's yeast).